The sequence spans 309 residues: uncharacterized protein (309 aa).

Belongs to the OprB family.

This is an uncharacterized protein from Aquifex aeolicus (strain VF5).